A 334-amino-acid chain; its full sequence is MRIVINGFGRIGRLVLRQILKRNSPIEVVAINDLVAGDLLTYLFKYDSTHGSFAPQATFSDGCLVMGERKIRFLAEKDVQKLPWKDLDVDVVVESTGLFVNRDDAAKHLDSGAKRVLITAPAKGDVPTFVMGVNHQQFDPADVIISNASCTTNCLAPLAKVLLDNFGIEEGLMTTVHAATATQSVVDGPSRKDWRGGRGAFQNIIPASTGAAKAVGLCLPELKGKLTGMAFRVPVADVSVVDLTVKLSSATTYEAICEAVKHAANTSMKNIMYYTEEAVVSSDFIGCEYSSIFDAQAGVALNDRFFKLVAWYDNEIGYATRIVDLLEYVQENSK.

NAD(+)-binding positions include 10–11, aspartate 33, lysine 77, and threonine 119; that span reads RI. Residues 149–151, threonine 180, 209–210, and arginine 232 each bind D-glyceraldehyde 3-phosphate; these read SCT and TG. Residue cysteine 150 is the Nucleophile of the active site. Asparagine 314 contributes to the NAD(+) binding site.

It belongs to the glyceraldehyde-3-phosphate dehydrogenase family. Homotetramer.

The protein resides in the cytoplasm. The catalysed reaction is D-glyceraldehyde 3-phosphate + phosphate + NAD(+) = (2R)-3-phospho-glyceroyl phosphate + NADH + H(+). It participates in carbohydrate degradation; glycolysis; pyruvate from D-glyceraldehyde 3-phosphate: step 1/5. In terms of biological role, catalyzes the oxidative phosphorylation of glyceraldehyde 3-phosphate (G3P) to 1,3-bisphosphoglycerate (BPG) using the cofactor NAD. The first reaction step involves the formation of a hemiacetal intermediate between G3P and a cysteine residue, and this hemiacetal intermediate is then oxidized to a thioester, with concomitant reduction of NAD to NADH. The reduced NADH is then exchanged with the second NAD, and the thioester is attacked by a nucleophilic inorganic phosphate to produce BPG. The sequence is that of Glyceraldehyde-3-phosphate dehydrogenase (gap) from Chlamydia trachomatis serovar L2 (strain ATCC VR-902B / DSM 19102 / 434/Bu).